We begin with the raw amino-acid sequence, 752 residues long: Cytosolic phospholipase A2 (752 aa).

The interval 1-178 (MSFIDPYQHI…MKKLLGPKKS (178 aa)) is phospholipid binding. Ser-2 is modified (phosphoserine). One can recognise a C2 domain in the interval 6–122 (PYQHIIVEHQ…KVGEKKEVPF (117 aa)). Asp-40, Thr-41, Asp-43, Asn-65, Asp-93, Ala-94, and Asn-95 together coordinate Ca(2+). Residues 140–740 (SCPDLRFSMA…SNVEARKFFN (601 aa)) enclose the PLA2c domain. Catalysis depends on Ser-228, which acts as the Nucleophile. The residue at position 268 (Thr-268) is a Phosphothreonine. The interval 427 to 457 (KHIVSNDSSDSDDEAQGPKGTENEDAEREYQ) is disordered. Residues Ser-434, Ser-435, and Ser-437 each carry the phosphoserine modification. Ser-505 carries the phosphoserine; by MAPK modification. Phosphoserine is present on residues Ser-511 and Ser-515. Lys-541 participates in a covalent cross-link: Glycyl lysine isopeptide (Lys-Gly) (interchain with G-Cter in SUMO2). Asp-549 acts as the Proton acceptor in catalysis. Lys-606 participates in a covalent cross-link: Glycyl lysine isopeptide (Lys-Gly) (interchain with G-Cter in SUMO2). Phosphoserine is present on residues Ser-727 and Ser-729.

Interacts with KAT5. Post-translationally, phosphorylated at both Ser-505 and Ser-727 in response to mitogenic stimuli. In terms of tissue distribution, in brain tissue, expressed in low levels in olfactory mitral and granule cells, in hippocampal pyramidal cells and in dentate and cerebellar granule cells.

It localises to the cytoplasm. It is found in the golgi apparatus membrane. Its subcellular location is the nucleus envelope. The enzyme catalyses a 1,2-diacyl-sn-glycero-3-phosphocholine + H2O = a 1-acyl-sn-glycero-3-phosphocholine + a fatty acid + H(+). It catalyses the reaction a 1-O-alkyl-2-acyl-sn-glycero-3-phosphocholine + H2O = a 1-O-alkyl-sn-glycero-3-phosphocholine + a fatty acid + H(+). The catalysed reaction is a 1-acyl-sn-glycero-3-phosphocholine + H2O = sn-glycerol 3-phosphocholine + a fatty acid + H(+). It carries out the reaction 1-hexadecanoyl-2-(5Z,8Z,11Z,14Z-eicosatetraenoyl)-sn-glycero-3-phosphocholine + H2O = 1-hexadecanoyl-sn-glycero-3-phosphocholine + (5Z,8Z,11Z,14Z)-eicosatetraenoate + H(+). The enzyme catalyses 1,2-di-(5Z,8Z,11Z,14Z-eicosatetraenoyl)-sn-glycero-3-phosphocholine + H2O = 1-(5Z,8Z,11Z,14Z-eicosatetraenoyl)-sn-glycero-3-phosphocholine + (5Z,8Z,11Z,14Z)-eicosatetraenoate + H(+). It catalyses the reaction 1-octadecanoyl-2-(5Z,8Z,11Z,14Z-eicosatetraenoyl)-sn-glycero-3-phosphocholine + H2O = 1-octadecanoyl-sn-glycero-3-phosphocholine + (5Z,8Z,11Z,14Z)-eicosatetraenoate + H(+). The catalysed reaction is 1-hexadecanoyl-2-(9Z,12Z-octadecadienoyl)-sn-glycero-3-phosphocholine + H2O = (9Z,12Z)-octadecadienoate + 1-hexadecanoyl-sn-glycero-3-phosphocholine + H(+). It carries out the reaction 1-octadecanoyl-2-(9Z,12Z,15Z-octadecatrienoyl)-sn-glycero-3-phosphocholine + H2O = (9Z,12Z,15Z)-octadecatrienoate + 1-octadecanoyl-sn-glycero-3-phosphocholine + H(+). The enzyme catalyses 1-(5Z,8Z,11Z,14Z-eicosatetraenoyl)-2-hexadecanoyl-sn-glycero-3-phosphocholine + H2O = 1-(5Z,8Z,11Z,14Z-eicosatetraenoyl)-sn-glycero-3-phosphocholine + hexadecanoate + H(+). It catalyses the reaction 1-O-hexadecyl-2-(5Z,8Z,11Z,14Z)-eicosatetraenoyl-sn-glycero-3-phosphocholine + H2O = 1-O-hexadecyl-sn-glycero-3-phosphocholine + (5Z,8Z,11Z,14Z)-eicosatetraenoate + H(+). The catalysed reaction is 1,2-di-(9Z-octadecenoyl)-sn-glycero-3-phospho-(1'-sn-glycerol) + H2O = 1-(9Z-octadecenoyl)-sn-glycero-3-phospho-(1'-sn-glycerol) + (9Z)-octadecenoate + H(+). It carries out the reaction 1-octadecanoyl-2-(5Z,8Z,11Z,14Z-eicosatetraenoyl)-sn-glycero-3-phosphate + H2O = 1-octadecanoyl-sn-glycero-3-phosphate + (5Z,8Z,11Z,14Z)-eicosatetraenoate + H(+). The enzyme catalyses 1-hexadecanoyl-sn-glycero-3-phosphocholine + H2O = sn-glycerol 3-phosphocholine + hexadecanoate + H(+). It catalyses the reaction 2-(prostaglandin E2)-sn-glycero-3-phosphoethanolamine + H2O = sn-glycero-3-phosphoethanolamine + prostaglandin E2 + H(+). The catalysed reaction is 2-[(15S)-hydroxy-(5Z,8Z,11Z,13E)-eicosatetraenoyl]-sn-glycero-3-phosphocholine + H2O = (15S)-hydroxy-(5Z,8Z,11Z,13E)-eicosatetraenoate + sn-glycerol 3-phosphocholine + H(+). It carries out the reaction 2-[(15R)-hydroxy-(5Z,8Z,11Z,13E)-eicosatetraenoyl]-sn-glycero-3-phosphocholine + H2O = (15R)-hydroxy-(5Z,8Z,11Z,13E)-eicosatetraenoate + sn-glycerol 3-phosphocholine + H(+). The enzyme catalyses 2-(prostaglandin E2)-sn-glycero-3-phosphocholine + H2O = prostaglandin E2 + sn-glycerol 3-phosphocholine + H(+). It catalyses the reaction 2-[(11R)-hydroxy-(5Z,8Z,12E,14Z)-eicosatetraenoyl]-sn-glycero-3-phosphocholine + H2O = (11R)-hydroxy-(5Z,8Z,12E,14Z)-eicosatetraenoate + sn-glycerol 3-phosphocholine + H(+). The catalysed reaction is 1-(5Z,8Z,11Z,14Z-eicosatetraenoyl)-2-O-hexadecyl-sn-glycero-3-phosphocholine + H2O = 2-O-hexadecyl-sn-glycero-3-phosphocholine + (5Z,8Z,11Z,14Z)-eicosatetraenoate + H(+). It carries out the reaction 1-octadecanoyl-2-(5Z,8Z,11Z,14Z-eicosatetraenoyl)-sn-glycero-3-phosphocholine + glycerol = 1-(5Z,8Z,11Z,14Z-eicosatetraenoyl)-glycerol + 1-octadecanoyl-sn-glycero-3-phosphocholine. The enzyme catalyses 1-octadecanoyl-2-(9Z,12Z,15Z-octadecatrienoyl)-sn-glycero-3-phosphocholine + glycerol = 1-(9Z,12Z,15Z-octadecatrienoyl)-glycerol + 1-octadecanoyl-sn-glycero-3-phosphocholine. It functions in the pathway lipid metabolism; arachidonate metabolism. The protein operates within membrane lipid metabolism; glycerophospholipid metabolism. Its pathway is lipid metabolism; prostaglandin biosynthesis. It participates in lipid metabolism; leukotriene B4 biosynthesis. Its activity is regulated as follows. Activated by cytosolic calcium, which is necessary for binding to membrane lipids. Activated by phosphorylation in response to mitogenic stimuli. Functionally, has primarily calcium-dependent phospholipase and lysophospholipase activities, with a major role in membrane lipid remodeling and biosynthesis of lipid mediators of the inflammatory response. Plays an important role in embryo implantation and parturition through its ability to trigger prostanoid production. Preferentially hydrolyzes the ester bond of the fatty acyl group attached at sn-2 position of phospholipids (phospholipase A2 activity). Selectively hydrolyzes sn-2 arachidonoyl group from membrane phospholipids, providing the precursor for eicosanoid biosynthesis via the cyclooxygenase pathway. In an alternative pathway of eicosanoid biosynthesis, hydrolyzes sn-2 fatty acyl chain of eicosanoid lysophopholipids to release free bioactive eicosanoids. Hydrolyzes the ester bond of the fatty acyl group attached at sn-1 position of phospholipids (phospholipase A1 activity) only if an ether linkage rather than an ester linkage is present at the sn-2 position. This hydrolysis is not stereospecific. Has calcium-independent phospholipase A2 and lysophospholipase activities in the presence of phosphoinositides. Has O-acyltransferase activity. Catalyzes the transfer of fatty acyl chains from phospholipids to a primary hydroxyl group of glycerol (sn-1 or sn-3), potentially contributing to monoacylglycerol synthesis. This Rattus norvegicus (Rat) protein is Cytosolic phospholipase A2 (Pla2g4a).